Reading from the N-terminus, the 337-residue chain is Oligopeptide transport ATP-binding protein OppD (337 aa).

The region spanning Leu-20–Leu-269 is the ABC transporter domain. Residue Gly-56–Ser-63 participates in ATP binding.

This sequence belongs to the ABC transporter superfamily. As to quaternary structure, the complex is composed of two ATP-binding proteins (OppD and OppF), two transmembrane proteins (OppB and OppC) and a solute-binding protein (OppA or MppA).

The protein localises to the cell inner membrane. It carries out the reaction a [peptide](out) + ATP + H2O = a [peptide](in) + ADP + phosphate + H(+). The enzyme catalyses L-alanyl-gamma-D-glutamyl-meso-2,6-diaminopimelate(out) + ATP + H2O = L-alanyl-gamma-D-glutamyl-meso-2,6-diaminopimelate(in) + ADP + phosphate + H(+). In terms of biological role, part of the ABC transporter complex OppABCDF involved in the uptake of oligopeptides and of the ABC transporter complex MppA-OppBCDF involved in the uptake of the cell wall murein tripeptide L-alanyl-gamma-D-glutamyl-meso-diaminopimelate. Probably responsible for energy coupling to the transport system. Plays an important nutritional role and is involved in the recycling of cell wall peptides. This Escherichia coli (strain K12) protein is Oligopeptide transport ATP-binding protein OppD (oppD).